We begin with the raw amino-acid sequence, 252 residues long: Triosephosphate isomerase (252 aa).

9 to 11 is a binding site for substrate; sequence NWK. His96 (electrophile) is an active-site residue. The Proton acceptor role is filled by Glu166. Residues Gly172, Ser212, and 233 to 234 contribute to the substrate site; that span reads GG.

This sequence belongs to the triosephosphate isomerase family. In terms of assembly, homodimer.

It localises to the cytoplasm. It carries out the reaction D-glyceraldehyde 3-phosphate = dihydroxyacetone phosphate. It functions in the pathway carbohydrate biosynthesis; gluconeogenesis. Its pathway is carbohydrate degradation; glycolysis; D-glyceraldehyde 3-phosphate from glycerone phosphate: step 1/1. Functionally, involved in the gluconeogenesis. Catalyzes stereospecifically the conversion of dihydroxyacetone phosphate (DHAP) to D-glyceraldehyde-3-phosphate (G3P). This chain is Triosephosphate isomerase, found in Chlorobium chlorochromatii (strain CaD3).